The chain runs to 972 residues: Optomotor-blind protein (972 aa).

Disordered stretches follow at residues 44 to 248, 263 to 286, 508 to 563, 645 to 676, 805 to 889, and 918 to 972; these read SLLT…YFPA, PGLY…HAHH, AKGF…HPHA, ADVE…TGSP, AVTP…PSEL, and EEAA…GTDQ. 2 stretches are compositionally biased toward low complexity: residues 49-80 and 97-142; these read GSNN…NTNN and SNHS…NNTS. The span at 155 to 176 shows a compositional bias: pro residues; sequence PPSPAGTPPPTIVGLPPIPPPN. Low complexity-rich tracts occupy residues 177 to 193 and 201 to 212; these read NNSS…AAAH and AHHSPSTGAAAP. Residues 213–225 are compositionally biased toward pro residues; the sequence is PAGPTGLPPPTPP. Low complexity predominate over residues 226–237; sequence HHLQQQQQQQQH. Residues 274–286 are compositionally biased toward basic residues; it reads PPHHPGAHPHAHH. A DNA-binding region (T-box) is located at residues 332–513; the sequence is LEGKDLWEKF…NNPFAKGFRD (182 aa). Gly residues predominate over residues 818-831; it reads PPGGGGGGLGGGVV. Over residues 835–851 the composition is skewed to low complexity; the sequence is PRSLSSSPRPRPASHSP. S887 is subject to Phosphoserine. Basic residues predominate over residues 952-963; the sequence is HPHHQTHLHSHH.

As to expression, in third-instar larvae, expressed in the brain region that will develop into optic lobes and more weakly in the thoracic part of the ventral ganglion.

It localises to the nucleus. Functionally, essential protein that may function as a transcription regulator. Vital for pupal development. Required for proper development of the optic lobes and wings, and abdominal pigmentation. This chain is Optomotor-blind protein (bi), found in Drosophila melanogaster (Fruit fly).